We begin with the raw amino-acid sequence, 163 residues long: Nucleotide-binding protein MS1759 (163 aa).

This sequence belongs to the YajQ family.

Nucleotide-binding protein. This Mannheimia succiniciproducens (strain KCTC 0769BP / MBEL55E) protein is Nucleotide-binding protein MS1759.